The sequence spans 165 residues: uncharacterized protein (165 aa).

A signal peptide spans 1–17 (MIRGFFLILLFLLLAFF).

This is an uncharacterized protein from Aquifex aeolicus (strain VF5).